The sequence spans 250 residues: 26 kDa periplasmic immunogenic protein (250 aa).

The N-terminal stretch at 1 to 28 (MNTRASNFLAASFSTIMLVGAFSLPAFA) is a signal peptide.

Its subcellular location is the periplasm. This is 26 kDa periplasmic immunogenic protein (bp26) from Brucella abortus (strain S19).